The sequence spans 423 residues: Histidine--tRNA ligase 2 (423 aa).

It belongs to the class-II aminoacyl-tRNA synthetase family. Homodimer.

It localises to the cytoplasm. The enzyme catalyses tRNA(His) + L-histidine + ATP = L-histidyl-tRNA(His) + AMP + diphosphate + H(+). The chain is Histidine--tRNA ligase 2 from Bacillus cereus (strain ATCC 14579 / DSM 31 / CCUG 7414 / JCM 2152 / NBRC 15305 / NCIMB 9373 / NCTC 2599 / NRRL B-3711).